The following is a 195-amino-acid chain: ATP-dependent Clp protease proteolytic subunit (195 aa).

Ser-99 serves as the catalytic Nucleophile. The active site involves His-124.

Belongs to the peptidase S14 family. As to quaternary structure, fourteen ClpP subunits assemble into 2 heptameric rings which stack back to back to give a disk-like structure with a central cavity, resembling the structure of eukaryotic proteasomes.

Its subcellular location is the cytoplasm. The catalysed reaction is Hydrolysis of proteins to small peptides in the presence of ATP and magnesium. alpha-casein is the usual test substrate. In the absence of ATP, only oligopeptides shorter than five residues are hydrolyzed (such as succinyl-Leu-Tyr-|-NHMec, and Leu-Tyr-Leu-|-Tyr-Trp, in which cleavage of the -Tyr-|-Leu- and -Tyr-|-Trp bonds also occurs).. Functionally, cleaves peptides in various proteins in a process that requires ATP hydrolysis. Has a chymotrypsin-like activity. Plays a major role in the degradation of misfolded proteins. In Carboxydothermus hydrogenoformans (strain ATCC BAA-161 / DSM 6008 / Z-2901), this protein is ATP-dependent Clp protease proteolytic subunit.